The sequence spans 569 residues: Proline--tRNA ligase (569 aa).

This sequence belongs to the class-II aminoacyl-tRNA synthetase family. ProS type 1 subfamily. In terms of assembly, homodimer.

It localises to the cytoplasm. It carries out the reaction tRNA(Pro) + L-proline + ATP = L-prolyl-tRNA(Pro) + AMP + diphosphate. In terms of biological role, catalyzes the attachment of proline to tRNA(Pro) in a two-step reaction: proline is first activated by ATP to form Pro-AMP and then transferred to the acceptor end of tRNA(Pro). As ProRS can inadvertently accommodate and process non-cognate amino acids such as alanine and cysteine, to avoid such errors it has two additional distinct editing activities against alanine. One activity is designated as 'pretransfer' editing and involves the tRNA(Pro)-independent hydrolysis of activated Ala-AMP. The other activity is designated 'posttransfer' editing and involves deacylation of mischarged Ala-tRNA(Pro). The misacylated Cys-tRNA(Pro) is not edited by ProRS. The chain is Proline--tRNA ligase from Legionella pneumophila subsp. pneumophila (strain Philadelphia 1 / ATCC 33152 / DSM 7513).